A 306-amino-acid chain; its full sequence is Transcription factor MYBS1 (306 aa).

Positions 18–73 constitute a Myb-like domain; that stretch reads WTREDDKAFENALAACAAPPPADGGAPDDDWFAALAASVPGARSAEEVRRHYEALV. The short motif at 72–86 is the Nuclear export signal 1 element; that stretch reads LVEDVAAIDAGRVPL. Residues 89–142 are disordered; it reads YAGEESAAPPDGAGAAAAASKDGGHRRDERKGGGGGYDGGKSCSKAEQERRKGI. Over residues 92 to 109 the composition is skewed to low complexity; sequence EESAAPPDGAGAAAAASK. Basic and acidic residues-rich tracts occupy residues 110–120 and 132–142; these read DGGHRRDERKG and SKAEQERRKGI. The short motif at 133–140 is the Nuclear localization signal 1 element; sequence KAEQERRK. Positions 136 to 192 constitute an HTH myb-type domain; it reads QERRKGIPWTEEEHRLFLLGLDKFGKGDWRSISRNFVISRTPTQVASHAQKYFIRLN. The H-T-H motif DNA-binding region spans 164 to 188; the sequence is WRSISRNFVISRTPTQVASHAQKYF. The short motif at 196-200 is the Nuclear localization signal 2 element; the sequence is RDRRR. The Nuclear export signal 2 signature appears at 203 to 215; sequence IHDITSVTAGDQV. The segment covering 228–241 has biased composition (low complexity); the sequence is ATGNPAAAALGPPG. The segment at 228–255 is disordered; it reads ATGNPAAAALGPPGMKHHHHHHPGGAPP.

Homodimer. Interacts with GAMYB. Expressed in aboveground tissues, with the highest level in leaves.

Its subcellular location is the nucleus. The protein resides in the cytoplasm. In terms of biological role, transcription activator that binds to 5'-TATCCA-3' elements in gene promoters. Derepresses strongly the sugar-repressed transcription of promoters containing SRS or 5'-TATCCA-3' elements. Functions with GAMYB to integrate diverse nutrient starvation and gibberellin (GA) signaling pathways during germination of grains. Sugar, nitrogen and phosphate starvation signals converge and interconnect with GA to promote the co-nuclear import of MYBS1 and GAMYB, resulting in the expression of a large set of GA-inducible hydrolases, transporters, and regulators that are essential for mobilization of nutrient reserves in the endosperm to support seedling growth. The chain is Transcription factor MYBS1 from Oryza sativa subsp. japonica (Rice).